A 741-amino-acid polypeptide reads, in one-letter code: Exostosin-1b (741 aa).

The Cytoplasmic portion of the chain corresponds to 1 to 7 (MQAKKRY). A helical; Signal-anchor for type II membrane protein membrane pass occupies residues 8-28 (LISLLTGAFLVLLIYLGGGGV). Over 29–741 (PGPAAPGSRS…RKKYREIERL (713 aa)) the chain is Lumenal. N-linked (GlcNAc...) asparagine glycans are attached at residues N84 and N325. 8 residues coordinate UDP-N-acetyl-alpha-D-glucosamine: R435, R544, D560, E561, D562, E648, D649, and R696. A Mn(2+)-binding site is contributed by D562. C647 and C699 form a disulfide bridge. D649 is a catalytic residue.

The protein belongs to the glycosyltransferase 47 family. The cofactor is Mn(2+).

It is found in the endoplasmic reticulum membrane. It catalyses the reaction 3-O-{[(1-&gt;4)-beta-D-GlcA-(1-&gt;4)-alpha-D-GlcNAc](n)-(1-&gt;4)-beta-D-GlcA-(1-&gt;3)-beta-D-Gal-(1-&gt;3)-beta-D-Gal-(1-&gt;4)-beta-D-Xyl}-L-seryl-[protein] + UDP-N-acetyl-alpha-D-glucosamine = 3-O-{alpha-D-GlcNAc-[(1-&gt;4)-beta-D-GlcA-(1-&gt;4)-alpha-D-GlcNAc](n)-(1-&gt;4)-beta-D-GlcA-(1-&gt;3)-beta-D-Gal-(1-&gt;3)-beta-D-Gal-(1-&gt;4)-beta-D-Xyl}-L-seryl-[protein] + UDP + H(+). The catalysed reaction is 3-O-{alpha-D-GlcNAc-[(1-&gt;4)-beta-D-GlcA-(1-&gt;4)-alpha-D-GlcNAc](n)-(1-&gt;4)-beta-D-GlcA-(1-&gt;3)-beta-D-Gal-(1-&gt;3)-beta-D-Gal-(1-&gt;4)-beta-D-Xyl}-L-seryl-[protein] + UDP-alpha-D-glucuronate = 3-O-{[(1-&gt;4)-beta-D-GlcA-(1-&gt;4)-alpha-D-GlcNAc](n+1)-(1-&gt;4)-beta-D-GlcA-(1-&gt;3)-beta-D-Gal-(1-&gt;3)-beta-D-Gal-(1-&gt;4)-beta-D-Xyl}-L-seryl-[protein] + UDP + H(+). The protein operates within protein modification; protein glycosylation. Its function is as follows. Glycosyltransferase required for the biosynthesis of heparan-sulfate. This chain is Exostosin-1b (ext1b), found in Danio rerio (Zebrafish).